Reading from the N-terminus, the 314-residue chain is MMGQNQTSISDFLLLGLPIQPEQQNLCYALFLAMYLTTLLGNLLIIVLIRLDSHLHTPMYLFLSNLSFSDLCFSSVTIPKLLQNMQNQDPSIPYADCLTQMYFFLLFGDLESFLLVAMAYDRYVAICFPLHYTAIMSPMLCLALVALSWVLTTFHAMLHTLLMARLCFCADNVIPHFFCDMSALLKLAFSDTRVNEWVIFIMGGLILVIPFLLILGSYARIVSSILKVPSSKGICKAFSTCGSHLSVVSLFYGTVIGLYLCSSANSSTLKDTVMAMMYTVVTPMLNPFIYSLRNRDMKGALSRVIHQKKTFFSL.

Residues 1–25 (MMGQNQTSISDFLLLGLPIQPEQQN) are Extracellular-facing. N-linked (GlcNAc...) asparagine glycosylation is present at N5. A helical transmembrane segment spans residues 26–49 (LCYALFLAMYLTTLLGNLLIIVLI). Residues 50–57 (RLDSHLHT) lie on the Cytoplasmic side of the membrane. A helical transmembrane segment spans residues 58–79 (PMYLFLSNLSFSDLCFSSVTIP). The Extracellular segment spans residues 80–100 (KLLQNMQNQDPSIPYADCLTQ). Residues 101–120 (MYFFLLFGDLESFLLVAMAY) traverse the membrane as a helical segment. At 121-139 (DRYVAICFPLHYTAIMSPM) the chain is on the cytoplasmic side. A helical membrane pass occupies residues 140 to 158 (LCLALVALSWVLTTFHAML). At 159-195 (HTLLMARLCFCADNVIPHFFCDMSALLKLAFSDTRVN) the chain is on the extracellular side. A helical transmembrane segment spans residues 196–219 (EWVIFIMGGLILVIPFLLILGSYA). Topologically, residues 220-236 (RIVSSILKVPSSKGICK) are cytoplasmic. Residues 237–259 (AFSTCGSHLSVVSLFYGTVIGLY) form a helical membrane-spanning segment. Residues 260–272 (LCSSANSSTLKDT) are Extracellular-facing. Residues 273 to 292 (VMAMMYTVVTPMLNPFIYSL) form a helical membrane-spanning segment. Residues 293 to 314 (RNRDMKGALSRVIHQKKTFFSL) are Cytoplasmic-facing.

Belongs to the G-protein coupled receptor 1 family.

Its subcellular location is the cell membrane. In terms of biological role, odorant receptor. The sequence is that of Olfactory receptor 1E1 (OR1E1) from Homo sapiens (Human).